The following is a 119-amino-acid chain: MKVGTDIIQIDRIEKLIDRYGDTFKQRYLSKEEIAAAKKVETLAGYWAAKEAIAKAFGCGIGAQLAFHDIMIAKDSRGAPYFTLSDEALKTYTIHSASISISHDGGFAIAVAAIDFEAA.

Positions 6 and 51 each coordinate Mg(2+).

The protein belongs to the P-Pant transferase superfamily. AcpS family. Mg(2+) serves as cofactor.

Its subcellular location is the cytoplasm. The enzyme catalyses apo-[ACP] + CoA = holo-[ACP] + adenosine 3',5'-bisphosphate + H(+). In terms of biological role, transfers the 4'-phosphopantetheine moiety from coenzyme A to a Ser of acyl-carrier-protein. This is Holo-[acyl-carrier-protein] synthase from Sulfurovum sp. (strain NBC37-1).